The chain runs to 101 residues: MMSPPMTTTLMFILNYAIISFHGQPSGISWGNHIETAEAAAILAMANRELRSRELLLWTSGSTHLLLQPILPLPLCLPFPLVPASIFKKMMLPLSAFSFWM.

The N-terminal stretch at 1–23 (MMSPPMTTTLMFILNYAIISFHG) is a signal peptide. A RxLR motif is present at residues 48–51 (RELR). The chain crosses the membrane as a helical span at residues 67–87 (LQPILPLPLCLPFPLVPASIF).

This sequence belongs to the RxLR effector family.

It is found in the secreted. Its subcellular location is the host cytoplasm. The protein localises to the host nucleus. It localises to the membrane. Functionally, effector that acts as a broad suppressor of cell death to interrupt plant immunity. Inhibits cell death induced by cell death-inducing proteins, including the PAMP elicitor INF1 from P.infestans. This chain is Secreted RxLR effector protein 64, found in Plasmopara viticola (Downy mildew of grapevine).